The primary structure comprises 185 residues: Transcription termination/antitermination protein NusG (185 aa).

A KOW domain is found at 134–162 (PGQMVRVIDGPFNDFDGLVEEVNYEKNRL).

This sequence belongs to the NusG family.

In terms of biological role, participates in transcription elongation, termination and antitermination. This chain is Transcription termination/antitermination protein NusG, found in Xylella fastidiosa (strain Temecula1 / ATCC 700964).